The following is a 552-amino-acid chain: CTP synthase (552 aa).

The interval 1–273 (MSESKKNPET…LTPIARRFNM (273 aa)) is amidoligase domain. A CTP-binding site is contributed by S21. S21 contributes to the UTP binding site. Residues 22–27 (SLGKGI) and D79 each bind ATP. Residues D79 and E147 each coordinate Mg(2+). Residues 154–156 (DIE), 194–199 (KTKPTQ), and K230 contribute to the CTP site. UTP is bound by residues 194-199 (KTKPTQ) and K230. Residues 298 to 548 (TIAFVGKYLS…IQKSLELKKV (251 aa)) enclose the Glutamine amidotransferase type-1 domain. G359 serves as a coordination point for L-glutamine. Residue C386 is the Nucleophile; for glutamine hydrolysis of the active site. Residues 387–390 (LGMQ), E410, and R478 each bind L-glutamine. Residues H521 and E523 contribute to the active site.

Belongs to the CTP synthase family. Homotetramer.

The enzyme catalyses UTP + L-glutamine + ATP + H2O = CTP + L-glutamate + ADP + phosphate + 2 H(+). The catalysed reaction is L-glutamine + H2O = L-glutamate + NH4(+). It carries out the reaction UTP + NH4(+) + ATP = CTP + ADP + phosphate + 2 H(+). Its pathway is pyrimidine metabolism; CTP biosynthesis via de novo pathway; CTP from UDP: step 2/2. Its activity is regulated as follows. Allosterically activated by GTP, when glutamine is the substrate; GTP has no effect on the reaction when ammonia is the substrate. The allosteric effector GTP functions by stabilizing the protein conformation that binds the tetrahedral intermediate(s) formed during glutamine hydrolysis. Inhibited by the product CTP, via allosteric rather than competitive inhibition. Functionally, catalyzes the ATP-dependent amination of UTP to CTP with either L-glutamine or ammonia as the source of nitrogen. Regulates intracellular CTP levels through interactions with the four ribonucleotide triphosphates. The polypeptide is CTP synthase (Wolinella succinogenes (strain ATCC 29543 / DSM 1740 / CCUG 13145 / JCM 31913 / LMG 7466 / NCTC 11488 / FDC 602W) (Vibrio succinogenes)).